The primary structure comprises 200 residues: ATP-dependent Clp protease proteolytic subunit 2 (200 aa).

Ser-101 serves as the catalytic Nucleophile. His-126 is an active-site residue.

Belongs to the peptidase S14 family. Fourteen ClpP subunits assemble into 2 heptameric rings which stack back to back to give a disk-like structure with a central cavity, resembling the structure of eukaryotic proteasomes.

The protein localises to the cytoplasm. It catalyses the reaction Hydrolysis of proteins to small peptides in the presence of ATP and magnesium. alpha-casein is the usual test substrate. In the absence of ATP, only oligopeptides shorter than five residues are hydrolyzed (such as succinyl-Leu-Tyr-|-NHMec, and Leu-Tyr-Leu-|-Tyr-Trp, in which cleavage of the -Tyr-|-Leu- and -Tyr-|-Trp bonds also occurs).. Functionally, cleaves peptides in various proteins in a process that requires ATP hydrolysis. Has a chymotrypsin-like activity. Plays a major role in the degradation of misfolded proteins. This chain is ATP-dependent Clp protease proteolytic subunit 2, found in Prochlorococcus marinus (strain NATL2A).